A 257-amino-acid chain; its full sequence is Caspase-14 (257 aa).

Residues His93 and Cys136 contribute to the active site. The propeptide occupies 156 to 167 (DEELGGDEVAVL).

It belongs to the peptidase C14A family. In terms of assembly, heterodimer of a large and a small subunit, both processed from the precursor; the mature active form is a p17/p10 dimer and the intermediate form a p20/p8 dimer. In terms of processing, maturation by proteolytic processing appears to be a two-step process. The precursor is processed by KLK7 to yield the p20/p8 intermediate form which acts the precursor to yield the p17/p10 mature form. Initially it was reported that cleavage by granzyme B, caspase-8 and -10 generates the two active subunits, however the physiological relevance has not been established. As to expression, embryo, adult liver and less in adult brain and kidney. Expressed in differentiating keratinocytes of embryonic skin (at protein level). Expressed in keratinocytes of adult skin suprabasal layers (at protein level).

The protein resides in the cytoplasm. Its subcellular location is the nucleus. Non-apoptotic caspase which is involved in epidermal differentiation. Seems to play a role in keratinocyte differentiation and is required for cornification. Regulates maturation of the epidermis by proteolytically processing filaggrin. In vitro is equally active on the synthetic caspase substrates WEHD-ACF and IETD-AFC. Involved in processing of prosaposin in the epidermis. May be involved in retinal pigment epithelium cell barrier function. The protein is Caspase-14 (Casp14) of Mus musculus (Mouse).